Reading from the N-terminus, the 146-residue chain is Snaclec coagulation factor IX/factor X-binding protein subunit B2 (146 aa).

An N-terminal signal peptide occupies residues 1–23 (MGRLIFVSFGLLVVFLSLSGTAA). Intrachain disulfides connect Cys-25–Cys-36, Cys-53–Cys-142, and Cys-119–Cys-134. Positions 32–143 (YEGHCYKPFN…CRMMANFVCE (112 aa)) constitute a C-type lectin domain.

It belongs to the snaclec family. As to quaternary structure, heterodimer of subunits A and B2; disulfide-linked. Expressed by the venom gland.

Its subcellular location is the secreted. In terms of biological role, anticoagulant protein which binds to the gamma-carboxyglutamic acid-domain regions of factors IX (F9) and factor X (F10) in the presence of calcium with a 1 to 1 stoichiometry. The protein is Snaclec coagulation factor IX/factor X-binding protein subunit B2 of Trimeresurus stejnegeri (Chinese green tree viper).